Here is a 333-residue protein sequence, read N- to C-terminus: MDLKALLRKLGNGLRLTADEAYLLGRGILSGSLCDVEVAASLTAMRVRGESPEEVAGFVKMAREFAVRVPLRIEAVDTAGTGGDGAGTINLSTAAAIVAAAAGAKVLKHGNRSASGLFGSADFMEAVGYNLEVGPEKAAELVEKVGFAFVFAPRYHPAFAKVAPVRRALPFRTIFNIVGPLANPGLVKRQLIGVAEERLLEVVAAAAAELGFEHAVVVHGSGVDEVSSEGATTVYEVKRGSLERYQIAPEDLGAPRVPIPRASDKEEAVAKALAGLRGELREASVAIALNAAFALYVAGVVGDPRDGFELAMRAIQEGVAYRKLVEAVEASRT.

Residues Gly-80, 83-84 (GD), Thr-88, 90-93 (NLST), 108-116 (KHGNRSASG), and Ser-120 each bind 5-phospho-alpha-D-ribose 1-diphosphate. Gly-80 contacts anthranilate. Ser-92 provides a ligand contact to Mg(2+). Asn-111 is a binding site for anthranilate. Arg-166 provides a ligand contact to anthranilate. Positions 224 and 225 each coordinate Mg(2+).

Belongs to the anthranilate phosphoribosyltransferase family. Homodimer. Mg(2+) serves as cofactor.

It catalyses the reaction N-(5-phospho-beta-D-ribosyl)anthranilate + diphosphate = 5-phospho-alpha-D-ribose 1-diphosphate + anthranilate. Its pathway is amino-acid biosynthesis; L-tryptophan biosynthesis; L-tryptophan from chorismate: step 2/5. Functionally, catalyzes the transfer of the phosphoribosyl group of 5-phosphorylribose-1-pyrophosphate (PRPP) to anthranilate to yield N-(5'-phosphoribosyl)-anthranilate (PRA). The protein is Anthranilate phosphoribosyltransferase of Pyrobaculum arsenaticum (strain DSM 13514 / JCM 11321 / PZ6).